Consider the following 155-residue polypeptide: MSPPTQSLQVKLLDPRFGDLWPLPAYATESSAGMDLRAALEAPMTLQPGDAALIPSGIAIHLADPQLCAVILPRSGLGHRHGIVLGNGTGLIDADYQGPLLISTWNRGREAFTIEPGDRIAQLVILPIVRMGLQVVDTFVDSARGAGGFGHTGVR.

Substrate is bound by residues 74–76, asparagine 87, and 91–93; these read RSG and LID.

The protein belongs to the dUTPase family. Mg(2+) serves as cofactor.

The enzyme catalyses dUTP + H2O = dUMP + diphosphate + H(+). It functions in the pathway pyrimidine metabolism; dUMP biosynthesis; dUMP from dCTP (dUTP route): step 2/2. Its function is as follows. This enzyme is involved in nucleotide metabolism: it produces dUMP, the immediate precursor of thymidine nucleotides and it decreases the intracellular concentration of dUTP so that uracil cannot be incorporated into DNA. The polypeptide is Deoxyuridine 5'-triphosphate nucleotidohydrolase (Xanthomonas axonopodis pv. citri (strain 306)).